The sequence spans 642 residues: Regulator of MON1-CCZ1 complex (642 aa).

Residues 462–616 (RPYTESILML…KLYETLSFPK (155 aa)) form the Mic1 domain.

It belongs to the RMC1 family. Component of the Mon1-Ccz1 guanyl-nucleotide exchange factor complex made up of Mon1, Ccz1 and Bulli; the interaction of Bulli with the Mon1-Ccz1 heterodimer is mediated via the C-terminal Mic1 domain of Bulli. Mon1 and Ccz1 form a stable complex which displays Rab7 GEF activity with or without Bulli; GEF activity is enhanced by Bulli possibly by improving membrane association of the complex.

Its subcellular location is the late endosome. In terms of biological role, positive regulator of the Rab7 guanyl-nucleotide exchange activity of the Mon1-Ccz1 complex, possibly by enhancing its endosomal membrane association. As part of the Mon1-Ccz1 complex involved in endolysosomal biogenesis possibly by mediating Rab conversion, the replacement of Rab5 with Rab7 during late endosome maturation. The protein is Regulator of MON1-CCZ1 complex of Drosophila melanogaster (Fruit fly).